The sequence spans 1274 residues: VWFA and cache domain-containing protein 1 (1274 aa).

Positions 1 to 35 (MARQPEEEETAVARARRPPLWLLCLVACWLLGAGA) are cleaved as a signal peptide. The Extracellular portion of the chain corresponds to 36-1095 (EADFSILDEA…ITLNMIKSAP (1060 aa)). N-linked (GlcNAc...) asparagine glycosylation occurs at Asn-145. In terms of domain architecture, VWFA spans 228–443 (HIVVILDHGA…TTVGRFYTNL (216 aa)). 2 consecutive Cache domains span residues 453 to 532 (FSLP…SEPP) and 772 to 853 (LTGP…HPTL). Residues 1096 to 1116 (VGPVAGGIMGCIMVLVLAVYA) traverse the membrane as a helical segment. At 1117 to 1274 (YRHQIHRRSH…VTVHTVDAEC (158 aa)) the chain is on the cytoplasmic side. The segment at 1179 to 1227 (PERRRRYWGRSGTESDHGYSTMSPQEDSENPPCNNDPLSAGVDVGNHDE) is disordered. The span at 1196 to 1215 (GYSTMSPQEDSENPPCNNDP) shows a compositional bias: polar residues.

The protein belongs to the calcium channel subunit alpha-2/delta family.

It is found in the membrane. In terms of biological role, may regulate voltage-dependent calcium channels. This chain is VWFA and cache domain-containing protein 1 (CACHD1), found in Homo sapiens (Human).